Reading from the N-terminus, the 286-residue chain is MNIMIALIPALLWGTVPLIITKFGGSTRQQTMGMTLGALTFAVIVFFFTDPVYTLKTVGISFITGCLWTVGQMFQLRAFKIIGVSKAMPISTGMQLVGTTLCGVILFHEWDTTLRIILGFIALALIVGGIFLTSYAEKEEDGTNALKQGLITLVISSLGYVGLVVLIQGFKIDGINAILPQAIGMVLSALIMTHSGGTEKRFNKRTLLLIIPGMIWAAGNVAMVHANQLVGVATGFSLSQLGVVISTIGGIVLLKEKKTQKEMLYVIVGVVLVVLGGILIGVAKGA.

Helical transmembrane passes span 4-26, 33-55, 114-136, 149-167, 177-194, 207-226, 230-252, and 264-283; these read MIAL…FGGS, GMTL…VYTL, LRII…TSYA, GLIT…VVLI, AILP…IMTH, LLLI…MVHA, VGVA…GGIV, and LYVI…IGVA.

Belongs to the GRP transporter (TC 2.A.7.5) family.

Its subcellular location is the cell membrane. The polypeptide is Putative sugar uptake protein lin0215 (Listeria innocua serovar 6a (strain ATCC BAA-680 / CLIP 11262)).